The primary structure comprises 193 residues: Cuticle protein 18.7 (193 aa).

Component of the cuticle of migratory locust which contains more than 100 different structural proteins. The protein is Cuticle protein 18.7 of Locusta migratoria (Migratory locust).